The following is a 459-amino-acid chain: MTLPGRPTGMARPRGAGPCSPGLERAPRRSVGELRLLFEARCAAVAAAAAAGEPRARGAKRRGGQVPNGLPRAAPAPVIPQLTVTSEEDVTPASPGPPDQEGNWLPAAGSHLQQPRRLSTSSLSSTGSSSLLEDSEDDLLSDSESRSRGNVQLETSEDVGQKSHWQKIRTMVNLPVMSPFRKRYSWVQLAGHTGSFKAAGTSGLILKRSSEPEHYCLVRLMADVLRGCVPAFHGIVERDGESYLQLQDLLDGFDGPCVLDCKMGVRTYLEEELTKARERPKLRKDMYKKMLAVDPEAPTEEEHAQRAVTKPRYMQWREGISSSTTLGFRIEGIKKADGSCSTDFKTTRSREQVTRVFEEFMQGDAEVLRRYLNRLQQIRDTLEISDFFRRHEVIGSSLLFVHDHCHRAGVWLIDFGKTTPLPDGQILDHRRPWEEGNREDGYLLGLDNLIGILASLAER.

Residues 1 to 29 (MTLPGRPTGMARPRGAGPCSPGLERAPRR) are disordered. Arginine 35, arginine 55, and arginine 62 each carry omega-N-methylarginine. The segment at 49–164 (AAAGEPRARG…TSEDVGQKSH (116 aa)) is disordered. Low complexity predominate over residues 116–132 (RRLSTSSLSSTGSSSLL). Residues serine 135 and serine 195 each carry the phosphoserine modification. ATP contacts are provided by residues serine 195, lysine 207, 247–249 (QDL), and aspartate 260. Residues lysine 262 and arginine 283 each coordinate substrate. Positions 285–293 (DMYKKMLAV) are calmodulin-binding. Substrate is bound at residue 310–317 (KPRYMQWR). ATP-binding residues include lysine 334 and aspartate 414. Substrate is bound at residue lysine 417.

It belongs to the inositol phosphokinase (IPK) family.

It is found in the cytoplasm. It localises to the cytoskeleton. The catalysed reaction is 1D-myo-inositol 1,4,5-trisphosphate + ATP = 1D-myo-inositol 1,3,4,5-tetrakisphosphate + ADP + H(+). Activated by calcium/calmodulin. Its function is as follows. Catalyzes the phosphorylation of 1D-myo-inositol 1,4,5-trisphosphate (InsP3) into 1D-myo-inositol 1,3,4,5-tetrakisphosphate and participates to the regulation of calcium homeostasis. This is Inositol-trisphosphate 3-kinase A from Mus musculus (Mouse).